A 478-amino-acid chain; its full sequence is MRVLFVASEAHPFIKSGGLGDVAGALPKELARKGVDVRVVIPKYREINNELKNKLRFNKWFNVDVGWRNQYCGILEYEYDGVIYYFVDNEYYFSRGGMYGHYDDAERFAFFDRAVLDMIKQLDWKPNVIHCNDWQTGMIPVLLKLEYMRKDMFYWDIKSVFSIHNIAFQGVFDPVILPELFGYDYEQYTNTNLKFDDGVGFMKGAINYSDMITTVSYSYAEEIKTPEFGERLDWLLREKSYMLRGILNGIDYDEFNPKNDSLINKNYDVNNINDKYENKRNLQSELGLSVNENIPMIAMVTRLTSQKGLDLLVHISERLLQNDIQLVIVGTGDKHYEDHFKWLDYKYGNKVSANIRFDNNLAHKAYAASDMFLMPSLFEPCGLGQLIALRYGSIPIVRETGGLKDTIRAYNEYTGEGNGFSFYNYNADELLHIIEYALKIYYDKNKWSNLVKNAMNSNNSWSKSADEYLNMYKELSYR.

Lys-15 serves as a coordination point for ADP-alpha-D-glucose.

Belongs to the glycosyltransferase 1 family. Bacterial/plant glycogen synthase subfamily.

The catalysed reaction is [(1-&gt;4)-alpha-D-glucosyl](n) + ADP-alpha-D-glucose = [(1-&gt;4)-alpha-D-glucosyl](n+1) + ADP + H(+). Its pathway is glycan biosynthesis; glycogen biosynthesis. Functionally, synthesizes alpha-1,4-glucan chains using ADP-glucose. This Clostridium botulinum (strain Eklund 17B / Type B) protein is Glycogen synthase.